Here is a 660-residue protein sequence, read N- to C-terminus: Threonine--tRNA ligase (660 aa).

The region spanning 1–49 is the TGS domain; the sequence is MPDSIVHVKKGQRFLDVIKDKNVVAVKIDSVLHDLRDVAERDVDAIPVS. Residues 225 to 554 are catalytic; the sequence is DHRRIIAEMD…LLEHYAGKLP (330 aa). C318, H369, and H531 together coordinate Zn(2+).

The protein belongs to the class-II aminoacyl-tRNA synthetase family. Homodimer. Zn(2+) is required as a cofactor.

It localises to the cytoplasm. The enzyme catalyses tRNA(Thr) + L-threonine + ATP = L-threonyl-tRNA(Thr) + AMP + diphosphate + H(+). Catalyzes the attachment of threonine to tRNA(Thr) in a two-step reaction: L-threonine is first activated by ATP to form Thr-AMP and then transferred to the acceptor end of tRNA(Thr). This chain is Threonine--tRNA ligase, found in Thermoplasma acidophilum (strain ATCC 25905 / DSM 1728 / JCM 9062 / NBRC 15155 / AMRC-C165).